Consider the following 366-residue polypeptide: uncharacterized protein (366 aa).

The next 6 membrane-spanning stretches (helical) occupy residues 164–184 (IPLI…FADI), 188–208 (IVVG…RKLL), 223–243 (VFPI…IYSL), 256–276 (FIGE…LILM), 299–319 (FFCL…GEYL), and 325–345 (FIMF…LSVI).

To A.fulgidus AF2058.

Its subcellular location is the cell membrane. This is an uncharacterized protein from Methanocaldococcus jannaschii (strain ATCC 43067 / DSM 2661 / JAL-1 / JCM 10045 / NBRC 100440) (Methanococcus jannaschii).